We begin with the raw amino-acid sequence, 154 residues long: AP-1 complex subunit sigma-3 (154 aa).

This sequence belongs to the adaptor complexes small subunit family. In terms of assembly, adaptor protein complex 1 (AP-1) is a heterotetramer composed of two large adaptins (gamma-type subunit AP1G1 and beta-type subunit AP1B1), a medium adaptin (mu-type subunit AP1M1 or AP1M2) and a small adaptin (sigma-type subunit AP1S1 or AP1S2 or AP1S3). As to expression, widely expressed.

The protein resides in the golgi apparatus. The protein localises to the cytoplasmic vesicle membrane. It localises to the membrane. Its subcellular location is the clathrin-coated pit. Subunit of clathrin-associated adaptor protein complex 1 that plays a role in protein sorting in the late-Golgi/trans-Golgi network (TGN) and/or endosomes. The AP complexes mediate both the recruitment of clathrin to membranes and the recognition of sorting signals within the cytosolic tails of transmembrane cargo molecules. Involved in TLR3 trafficking. The sequence is that of AP-1 complex subunit sigma-3 (AP1S3) from Homo sapiens (Human).